Reading from the N-terminus, the 338-residue chain is MKRMIALDGAQGEGGGQILRSALSLSMITGQPFTITSIRAGRAKPGLLRQHLTAVKAAAEICRATVEGAELGSQRLVFRPGTVRGGEYRFAIGSAGSCTLVLQTVLPALWFADGPSRVEVSGGTDNPSAPPADFIRRVLEPLLAKIGIHQQTTLLRHGFYPAGGGVVATEVSPVASFNTLQLGERGNIVQMCGEVLLAGVPRHVAEREIATLAGSFSLHEQNIHNLPRDQGPGNTVSLEVESENITERFFVVGEKRVSAEVVAAQLVKEVKRYLASPAAVGEYLADQLVLPMALAGAGEFKVAHPSCHLLTNIAVVERFLPVRFGLIETDGVTRVSIE.

Residues Q103 and 283 to 287 (YLADQ) contribute to the ATP site. H308 (tele-AMP-histidine intermediate) is an active-site residue.

It belongs to the RNA 3'-terminal cyclase family. Type 1 subfamily.

It is found in the cytoplasm. It carries out the reaction a 3'-end 3'-phospho-ribonucleotide-RNA + ATP = a 3'-end 2',3'-cyclophospho-ribonucleotide-RNA + AMP + diphosphate. Its function is as follows. Catalyzes the conversion of 3'-phosphate to a 2',3'-cyclic phosphodiester at the end of RNA. The mechanism of action of the enzyme occurs in 3 steps: (A) adenylation of the enzyme by ATP; (B) transfer of adenylate to an RNA-N3'P to produce RNA-N3'PP5'A; (C) and attack of the adjacent 2'-hydroxyl on the 3'-phosphorus in the diester linkage to produce the cyclic end product. The biological role of this enzyme is unknown but it is likely to function in some aspects of cellular RNA processing. This is RNA 3'-terminal phosphate cyclase from Escherichia coli O139:H28 (strain E24377A / ETEC).